A 577-amino-acid chain; its full sequence is Glycine--tRNA ligase (577 aa).

Substrate is bound by residues arginine 98 and glutamate 164. Residues 196–198, 206–211, 328–329, and 451–454 contribute to the ATP site; these read RNE, IRLREF, EC, and GIDR. Residue 211–215 participates in substrate binding; it reads FTQAE. 447 to 451 provides a ligand contact to substrate; sequence EPSYG.

It belongs to the class-II aminoacyl-tRNA synthetase family.

The protein localises to the cytoplasm. It catalyses the reaction tRNA(Gly) + glycine + ATP = glycyl-tRNA(Gly) + AMP + diphosphate. Functionally, catalyzes the attachment of glycine to tRNA(Gly). This Methanocaldococcus jannaschii (strain ATCC 43067 / DSM 2661 / JAL-1 / JCM 10045 / NBRC 100440) (Methanococcus jannaschii) protein is Glycine--tRNA ligase.